We begin with the raw amino-acid sequence, 78 residues long: Conotoxin Cal6.3a (78 aa).

The N-terminal stretch at 1–21 (MRFLHFLIVAVLLASFMESGA) is a signal peptide. The propeptide occupies 22–26 (MPRNP). 3 disulfides stabilise this stretch: C38-C49, C41-C53, and C48-C56. Residue Q76 is modified to Glutamine amide.

Expressed by the venom duct.

It is found in the secreted. Functionally, probable neurotoxin with unknown target. Possibly targets ion channels. The chain is Conotoxin Cal6.3a from Californiconus californicus (California cone).